A 424-amino-acid chain; its full sequence is O-methyltransferase bfoD (424 aa).

Asp-275 serves as a coordination point for S-adenosyl-L-methionine. His-326 serves as the catalytic Proton acceptor.

This sequence belongs to the class I-like SAM-binding methyltransferase superfamily. Cation-independent O-methyltransferase family.

Its pathway is secondary metabolite biosynthesis. Its function is as follows. Cytochrome P450 monooxygenase; part of the gene cluster that mediates the biosynthesis of bifonsecin B, a dimeric gamma-naphthopyrone. The first step in the biosynthesis of bifonsecin B is the production of gamma-naphthopyrone precursor YWA1 by the non-reducing polyketide synthase albA, via condensation of one acetyl-CoA starter unit with 6 malonyl-CoA units. YWA1 is then methylated by bfoE at position C-6 to yield foncesin which is further methylated at position C-8 by bfoD to produce fonsecin B. A key enzyme in the biosynthetic pathway is the cytochrome P450 monooxygenase bfoB which catalyzes the oxidative dimerization of fonsecin B to bifonsecin B. Bfob also catalyzes the oxidative dimerization of rubrofusarin B into nigerone. The stereoselectivity of bfoB is influenced by the two natural monomeric substrates; homodimerization of fonsecin B yields a stereochemically pure biaryl, M-foncerine B, while rubrofusarin B yields a mixture of enantiomers M- and P-nigerone. The chain is O-methyltransferase bfoD from Aspergillus brasiliensis (strain CBS 101740 / IMI 381727 / IBT 21946).